The chain runs to 261 residues: Cytochrome c oxidase subunit 3 (261 aa).

Residues 1–15 (MTHQTHAYHMVNPSP) are Mitochondrial matrix-facing. The helical transmembrane segment at 16–34 (WPLTGALSALLMTSGLIMW) threads the bilayer. Topologically, residues 35–40 (FHFNST) are mitochondrial intermembrane. The chain crosses the membrane as a helical span at residues 41–66 (ALLMLGLTTNMLTMYQWWRDIIREST). At 67–72 (FQGHHT) the chain is on the mitochondrial matrix side. Residues 73–105 (PVVQKGLRYGMILFIISEVLFFTGFFWAFYHSS) traverse the membrane as a helical segment. At 106–128 (LAPTPELGGCWPPTGINPLNPLE) the chain is on the mitochondrial intermembrane side. Residues 129-152 (VPLLNTSVLLASGVSITWAHHSLM) form a helical membrane-spanning segment. Topologically, residues 153 to 155 (EGN) are mitochondrial matrix. A helical transmembrane segment spans residues 156 to 183 (RSHMLQALFITITLGVYFTLLQASEYYE). Residues 184-190 (APFTISD) lie on the Mitochondrial intermembrane side of the membrane. A helical membrane pass occupies residues 191–223 (GVYGSTFFVATGFHGLHVIIGSTFLIVCFFRQL). At 224–232 (KFHFTSNHH) the chain is on the mitochondrial matrix side. A helical membrane pass occupies residues 233-256 (FGFEAAAWYWHFVDVVWLFLYVSI). The Mitochondrial intermembrane portion of the chain corresponds to 257–261 (YWWGS).

This sequence belongs to the cytochrome c oxidase subunit 3 family. Component of the cytochrome c oxidase (complex IV, CIV), a multisubunit enzyme composed of 14 subunits. The complex is composed of a catalytic core of 3 subunits MT-CO1, MT-CO2 and MT-CO3, encoded in the mitochondrial DNA, and 11 supernumerary subunits COX4I, COX5A, COX5B, COX6A, COX6B, COX6C, COX7A, COX7B, COX7C, COX8 and NDUFA4, which are encoded in the nuclear genome. The complex exists as a monomer or a dimer and forms supercomplexes (SCs) in the inner mitochondrial membrane with NADH-ubiquinone oxidoreductase (complex I, CI) and ubiquinol-cytochrome c oxidoreductase (cytochrome b-c1 complex, complex III, CIII), resulting in different assemblies (supercomplex SCI(1)III(2)IV(1) and megacomplex MCI(2)III(2)IV(2)).

It is found in the mitochondrion inner membrane. It catalyses the reaction 4 Fe(II)-[cytochrome c] + O2 + 8 H(+)(in) = 4 Fe(III)-[cytochrome c] + 2 H2O + 4 H(+)(out). Functionally, component of the cytochrome c oxidase, the last enzyme in the mitochondrial electron transport chain which drives oxidative phosphorylation. The respiratory chain contains 3 multisubunit complexes succinate dehydrogenase (complex II, CII), ubiquinol-cytochrome c oxidoreductase (cytochrome b-c1 complex, complex III, CIII) and cytochrome c oxidase (complex IV, CIV), that cooperate to transfer electrons derived from NADH and succinate to molecular oxygen, creating an electrochemical gradient over the inner membrane that drives transmembrane transport and the ATP synthase. Cytochrome c oxidase is the component of the respiratory chain that catalyzes the reduction of oxygen to water. Electrons originating from reduced cytochrome c in the intermembrane space (IMS) are transferred via the dinuclear copper A center (CU(A)) of subunit 2 and heme A of subunit 1 to the active site in subunit 1, a binuclear center (BNC) formed by heme A3 and copper B (CU(B)). The BNC reduces molecular oxygen to 2 water molecules using 4 electrons from cytochrome c in the IMS and 4 protons from the mitochondrial matrix. In Syncerus caffer (African buffalo), this protein is Cytochrome c oxidase subunit 3 (MT-CO3).